Here is a 197-residue protein sequence, read N- to C-terminus: MASIQDLYETVSRVLGNQAGKVISALGEITVECLPEHYISVMTALRDHEELHFELLVDLCGVDYSTYKNEAWQGKRFAVVSQLLSVKNNQRIRVRVWVSDDDFPVVESVVDIYNSADWYEREAFDMYGIMFNNHPDLRRILTDYGFVGHPFRKDFPISGYVEMRYDEEQKRVIYQPVTIEPREITPRIVREENYGGQ.

The protein belongs to the complex I 30 kDa subunit family. NDH-1 is composed of 14 different subunits. Subunits NuoB, C, D, E, F, and G constitute the peripheral sector of the complex.

Its subcellular location is the cell inner membrane. The enzyme catalyses a quinone + NADH + 5 H(+)(in) = a quinol + NAD(+) + 4 H(+)(out). Functionally, NDH-1 shuttles electrons from NADH, via FMN and iron-sulfur (Fe-S) centers, to quinones in the respiratory chain. The immediate electron acceptor for the enzyme in this species is believed to be ubiquinone. Couples the redox reaction to proton translocation (for every two electrons transferred, four hydrogen ions are translocated across the cytoplasmic membrane), and thus conserves the redox energy in a proton gradient. This chain is NADH-quinone oxidoreductase subunit C, found in Neisseria meningitidis serogroup B (strain ATCC BAA-335 / MC58).